The following is a 512-amino-acid chain: Histidine ammonia-lyase (512 aa).

A cross-link (5-imidazolinone (Ala-Gly)) is located at residues 145–147 (ASG). Position 146 is a 2,3-didehydroalanine (Ser) (serine 146).

The protein belongs to the PAL/histidase family. In terms of processing, contains an active site 4-methylidene-imidazol-5-one (MIO), which is formed autocatalytically by cyclization and dehydration of residues Ala-Ser-Gly.

It is found in the cytoplasm. It catalyses the reaction L-histidine = trans-urocanate + NH4(+). The protein operates within amino-acid degradation; L-histidine degradation into L-glutamate; N-formimidoyl-L-glutamate from L-histidine: step 1/3. In Pseudomonas fluorescens (strain SBW25), this protein is Histidine ammonia-lyase.